Here is a 178-residue protein sequence, read N- to C-terminus: Translation initiation factor IF-3 (178 aa).

Residues 1–20 (MRRPFKAAAPTKDGPRSNRD) form a disordered region.

The protein belongs to the IF-3 family. Monomer.

Its subcellular location is the cytoplasm. Functionally, IF-3 binds to the 30S ribosomal subunit and shifts the equilibrium between 70S ribosomes and their 50S and 30S subunits in favor of the free subunits, thus enhancing the availability of 30S subunits on which protein synthesis initiation begins. This is Translation initiation factor IF-3 from Mesorhizobium japonicum (strain LMG 29417 / CECT 9101 / MAFF 303099) (Mesorhizobium loti (strain MAFF 303099)).